The sequence spans 156 residues: Large ribosomal subunit protein uL30 (156 aa).

The protein belongs to the universal ribosomal protein uL30 family. In terms of assembly, part of the 50S ribosomal subunit.

The chain is Large ribosomal subunit protein uL30 from Sulfolobus acidocaldarius (strain ATCC 33909 / DSM 639 / JCM 8929 / NBRC 15157 / NCIMB 11770).